A 276-amino-acid chain; its full sequence is Large ribosomal subunit protein uL2 (276 aa).

Disordered stretches follow at residues 29–54 (PEKS…SRRR) and 224–276 (AMNP…RGQR). Over residues 256–276 (YKTRSKKKPSSKLIVKRRGQR) the composition is skewed to basic residues.

Belongs to the universal ribosomal protein uL2 family. As to quaternary structure, part of the 50S ribosomal subunit. Forms a bridge to the 30S subunit in the 70S ribosome.

Functionally, one of the primary rRNA binding proteins. Required for association of the 30S and 50S subunits to form the 70S ribosome, for tRNA binding and peptide bond formation. It has been suggested to have peptidyltransferase activity; this is somewhat controversial. Makes several contacts with the 16S rRNA in the 70S ribosome. The protein is Large ribosomal subunit protein uL2 of Maridesulfovibrio salexigens (strain ATCC 14822 / DSM 2638 / NCIMB 8403 / VKM B-1763) (Desulfovibrio salexigens).